Here is a 404-residue protein sequence, read N- to C-terminus: G-protein coupled receptor 143 (404 aa).

The Extracellular segment spans residues 1–28 (MASPRLGTFCCPTRDAATQLVLSFQPRA). The chain crosses the membrane as a helical span at residues 29 to 49 (FHALCLGSGGLRLALGLLQLL). At 50–78 (PGRRPAGPGSPATSPPASVRILRAAAACD) the chain is on the cytoplasmic side. A helical membrane pass occupies residues 79–99 (LLGCLGMVIRSTVWLGFPNFV). Topologically, residues 100–124 (DSVSDMNHTEIWPAAFCVGSAMWIQ) are extracellular. N106 is a glycosylation site (N-linked (GlcNAc...) asparagine). The chain crosses the membrane as a helical span at residues 125-145 (LLYSACFWWLFCYAVDAYLVI). Over 146 to 149 (RRSA) the chain is Cytoplasmic. A helical membrane pass occupies residues 150–170 (GLSTILLYHIMAWGLATLLCV). Over 171–191 (EGAAMLYYPSVSRCERGLDHA) the chain is Extracellular. A helical membrane pass occupies residues 192–212 (IPHYVTMYLPLLLVLVANPIL). Topologically, residues 213–248 (FQKTVTAVASLLKGRQGIYTENERRMGAVIKIRFFK) are cytoplasmic. Residues 221–238 (ASLLKGRQGIYTENERRM) form a necessary for its G protein-activation ability and normal distribution of melanosomes region. Residues 222–231 (SLLKGRQGIY) carry the lysosomal/melanosomal membrane localization signal motif. The chain crosses the membrane as a helical span at residues 249–269 (IMLVLIICWLSNIINESLLFY). Residues 270 to 292 (LEMQTDINGGSLKPVRTAAKTTW) are Extracellular-facing. The chain crosses the membrane as a helical span at residues 293-313 (FIMGILNPAQGFLLSLAFYGW). Topologically, residues 314 to 404 (TGCSLGFQSP…DPALPTHGDL (91 aa)) are cytoplasmic. A lysosomal/melanosomal membrane localization signal motif is present at residues 329 to 330 (WE). The interval 338-404 (EGAHPSPLMP…DPALPTHGDL (67 aa)) is disordered. Residues 355-366 (KVSQVGGQTSDE) show a composition bias toward polar residues.

This sequence belongs to the G-protein coupled receptor OA family. As to quaternary structure, interacts with heterotrimeric G(i) proteins. Interacts with ARRB1 and ARRB2. Interacts with MLANA. In terms of processing, glycosylated. Post-translationally, phosphorylated. Expressed at high levels in the retina, including the retinal pigment epithelium (RPE), and in melanocytes. Weak expression is observed in brain and adrenal gland.

Its subcellular location is the melanosome membrane. The protein localises to the lysosome membrane. The protein resides in the apical cell membrane. Its function is as follows. Receptor for tyrosine, L-DOPA and dopamine. After binding to L-DOPA, stimulates Ca(2+) influx into the cytoplasm, increases secretion of the neurotrophic factor SERPINF1 and relocalizes beta arrestin at the plasma membrane; this ligand-dependent signaling occurs through a G(q)-mediated pathway in melanocytic cells. Its activity is mediated by G proteins which activate the phosphoinositide signaling pathway. Also plays a role as an intracellular G protein-coupled receptor involved in melanosome biogenesis, organization and transport. In Homo sapiens (Human), this protein is G-protein coupled receptor 143 (GPR143).